The primary structure comprises 395 residues: uncharacterized protein (395 aa).

Transmembrane regions (helical) follow at residues 12-34, 44-66, 75-94, 99-121, 134-156, 160-182, 208-230, 245-264, 271-293, 298-320, 341-360, and 364-381; these read LLASSLLLTIGRGATLPFMTIYL, LIGYAMTIALTIGVVFSLGFGIL, YMLLAITAFASGFIAITLVN, VVLFFALINCAYSVFATVLKAWF, FSINYTMLNIGWTIGPPLGTLLV, INLPFWLAAICSAFPMLFIQIWV, LLWFTCSGFLASFVSGAFASCIS, VVAVVLPVNAAMVVTLQYSV, ANIRALMTAGTLCFVIGLVGFIF, LLLWGMSAAVFTVGEIIYAPGEY, LGWLGAAINPLVSGVVLTSL, and SLFVILALVIIAAWVLML.

It belongs to the major facilitator superfamily.

The protein localises to the cell inner membrane. A transporter able to export peptides. When overexpressed, allows cells deleted for multiple peptidases (pepA, pepB, pepD and pepN) to grow in the presence of dipeptides Ala-Gln or Gly-Tyr which otherwise inhibit growth. Cells overexpressing this protein have decreased intracellular levels of Ala-Gln dipeptide, and in a system that produces the Ala-Gln dipeptide overproduction of this protein increases export of the dipeptide. This is an uncharacterized protein from Escherichia coli (strain K12).